Reading from the N-terminus, the 620-residue chain is Membrane protein insertase YidC (620 aa).

The next 6 helical transmembrane spans lie at 5–25 (QIIGISLISVLMLGYFGFMST), 343–363 (LGWPLVSWINRFVVIPVFDGL), 366–386 (VFSSFGLIIVILVLLIKLVLL), 436–456 (LSGCIPVLLQMPILLAMFNFF), 482–502 (LPFTIPFYGSHVSMFTLLMTI), and 529–549 (PVVFLFVLNSFPAGLSFYYFV).

This sequence belongs to the OXA1/ALB3/YidC family. Type 1 subfamily. As to quaternary structure, interacts with the Sec translocase complex via SecD. Specifically interacts with transmembrane segments of nascent integral membrane proteins during membrane integration.

The protein localises to the cell inner membrane. Its function is as follows. Required for the insertion and/or proper folding and/or complex formation of integral membrane proteins into the membrane. Involved in integration of membrane proteins that insert both dependently and independently of the Sec translocase complex, as well as at least some lipoproteins. Aids folding of multispanning membrane proteins. The sequence is that of Membrane protein insertase YidC from Cytophaga hutchinsonii (strain ATCC 33406 / DSM 1761 / CIP 103989 / NBRC 15051 / NCIMB 9469 / D465).